A 235-amino-acid polypeptide reads, in one-letter code: Phosphoribosylaminoimidazole-succinocarboxamide synthase (235 aa).

Belongs to the SAICAR synthetase family.

The enzyme catalyses 5-amino-1-(5-phospho-D-ribosyl)imidazole-4-carboxylate + L-aspartate + ATP = (2S)-2-[5-amino-1-(5-phospho-beta-D-ribosyl)imidazole-4-carboxamido]succinate + ADP + phosphate + 2 H(+). The protein operates within purine metabolism; IMP biosynthesis via de novo pathway; 5-amino-1-(5-phospho-D-ribosyl)imidazole-4-carboxamide from 5-amino-1-(5-phospho-D-ribosyl)imidazole-4-carboxylate: step 1/2. This Clostridium perfringens (strain SM101 / Type A) protein is Phosphoribosylaminoimidazole-succinocarboxamide synthase.